We begin with the raw amino-acid sequence, 350 residues long: Protein RecA (350 aa).

Gly67–Thr74 contacts ATP.

This sequence belongs to the RecA family.

It is found in the cytoplasm. Can catalyze the hydrolysis of ATP in the presence of single-stranded DNA, the ATP-dependent uptake of single-stranded DNA by duplex DNA, and the ATP-dependent hybridization of homologous single-stranded DNAs. It interacts with LexA causing its activation and leading to its autocatalytic cleavage. This chain is Protein RecA, found in Mycobacterium avium (strain 104).